Reading from the N-terminus, the 341-residue chain is Fructose-1,6-bisphosphatase, cytosolic (341 aa).

E71, E100, D121, L123, and D124 together coordinate Mg(2+). Substrate contacts are provided by residues 124-127 (DGSS), N215, Y247, Y267, and K277. E283 serves as a coordination point for Mg(2+).

Belongs to the FBPase class 1 family. It depends on Mg(2+) as a cofactor.

Its subcellular location is the cytoplasm. It localises to the nucleus. The catalysed reaction is beta-D-fructose 1,6-bisphosphate + H2O = beta-D-fructose 6-phosphate + phosphate. In terms of biological role, catalyzes the first irreversible reaction from fructose-1,6-bisphosphate to fructose-6-phosphate and inorganic phosphate and plays an important regulatory role in sucrose biosynthesis and metabolism. Its activity is essential to regulate starch levels. Functions in fructose-mediated signaling independently of its catalytic activity in sugar metabolism. May act downstream of ABA2/GIN1, which is involved in abscisic acid (ABA) synthesis to regulate autotrophic transition and modulate early seedling establishment after seed germination. The chain is Fructose-1,6-bisphosphatase, cytosolic from Arabidopsis thaliana (Mouse-ear cress).